Reading from the N-terminus, the 327-residue chain is Flotillin-like protein FloA (327 aa).

The next 2 helical transmembrane spans lie at 6–26 (VLFF…FTFV) and 28–48 (IMLW…TLVG).

The protein belongs to the flotillin-like FloA family. As to quaternary structure, homooligomerizes.

Its subcellular location is the cell membrane. It localises to the membrane raft. Found in functional membrane microdomains (FMM) that may be equivalent to eukaryotic membrane rafts. FMMs are highly dynamic and increase in number as cells age. Flotillins are thought to be important factors in membrane fluidity. The sequence is that of Flotillin-like protein FloA from Priestia megaterium (strain DSM 319 / IMG 1521) (Bacillus megaterium).